The primary structure comprises 317 residues: MAPPPAVVAHPLSSQATGLDMVHEFNQKLTKSDEHTWESFKFAPIRESTVSRAMTRRYFEDLDKYAESDVVIIGAGSCGLSAAYVLAKSRPDLKIAIVEAGVAPGGGAWLGGQLFSAMVMRKPAEQFLEEIGVPYEDEGDYVVVKHAALFTSTLMSQVLKFPNVKLFNATAVEDLITRKDAQGNLRIAGVVTNWTLVSMHHDDQSCMDPNTINAPIIISTTGHDGPFGAFSVKRLVSMNAIEKLGGMRGLDMGLAEDAIVKRTREIVPGLVVGGMELSEVDGANRMGPTFGAMALSGVKAAETVLEVFDTRKKQNQE.

Substrate-binding positions include Cys78, 99–100, Gly107, and Val172; that span reads EA. A 2,3-didehydroalanine (Cys) modification is found at Cys206. Residues Asp208, His223, Met275, and 285–287 contribute to the substrate site; that span reads RMG.

The protein belongs to the THI4 family. In terms of assembly, homooctamer. Fe cation is required as a cofactor. During the catalytic reaction, a sulfide is transferred from Cys-206 to a reaction intermediate, generating a dehydroalanine residue.

The protein localises to the cytoplasm. Its subcellular location is the nucleus. The enzyme catalyses [ADP-thiazole synthase]-L-cysteine + glycine + NAD(+) = [ADP-thiazole synthase]-dehydroalanine + ADP-5-ethyl-4-methylthiazole-2-carboxylate + nicotinamide + 3 H2O + 2 H(+). Functionally, involved in biosynthesis of the thiamine precursor thiazole. Catalyzes the conversion of NAD and glycine to adenosine diphosphate 5-(2-hydroxyethyl)-4-methylthiazole-2-carboxylic acid (ADT), an adenylated thiazole intermediate. The reaction includes an iron-dependent sulfide transfer from a conserved cysteine residue of the protein to a thiazole intermediate. The enzyme can only undergo a single turnover, which suggests it is a suicide enzyme. May have additional roles in adaptation to various stress conditions and in DNA damage tolerance. In Yarrowia lipolytica (strain CLIB 122 / E 150) (Yeast), this protein is Thiamine thiazole synthase.